Here is a 501-residue protein sequence, read N- to C-terminus: Lysine--tRNA ligase (501 aa).

Glu411 and Glu418 together coordinate Mg(2+).

The protein belongs to the class-II aminoacyl-tRNA synthetase family. Homodimer. Mg(2+) is required as a cofactor.

It localises to the cytoplasm. The enzyme catalyses tRNA(Lys) + L-lysine + ATP = L-lysyl-tRNA(Lys) + AMP + diphosphate. The polypeptide is Lysine--tRNA ligase (Aliivibrio salmonicida (strain LFI1238) (Vibrio salmonicida (strain LFI1238))).